Here is a 561-residue protein sequence, read N- to C-terminus: Potassium-transporting ATPase potassium-binding subunit (561 aa).

Transmembrane regions (helical) follow at residues 4–24, 65–85, 133–153, 177–197, 253–273, 285–305, 380–400, 417–437, 484–504, and 528–548; these read IVMQ…PLGI, AVSV…VLML, IGLT…LFAV, LYIL…QGVV, FTNL…VVMF, AIMT…TISE, GLYG…LLVG, MVCL…AVAV, MVGA…ALYL, and FIGL…LPAL.

The protein belongs to the KdpA family. In terms of assembly, the system is composed of three essential subunits: KdpA, KdpB and KdpC.

Its subcellular location is the cell membrane. In terms of biological role, part of the high-affinity ATP-driven potassium transport (or Kdp) system, which catalyzes the hydrolysis of ATP coupled with the electrogenic transport of potassium into the cytoplasm. This subunit binds the extracellular potassium ions and delivers the ions to the membrane domain of KdpB through an intramembrane tunnel. The polypeptide is Potassium-transporting ATPase potassium-binding subunit (Listeria monocytogenes serovar 1/2a (strain ATCC BAA-679 / EGD-e)).